A 167-amino-acid polypeptide reads, in one-letter code: uncharacterized protein (167 aa).

A helical membrane pass occupies residues 4–24 (IIGLFFIIILIVINISILAYD).

The protein resides in the membrane. This is an uncharacterized protein from Rickettsia prowazekii (strain Madrid E).